Reading from the N-terminus, the 363-residue chain is Ferredoxin--NADP reductase, cyanelle (363 aa).

Residues 1–65 constitute a cyanelle transit peptide; sequence MAFVASVPVF…TFEVDTTIRA (65 aa). One can recognise an FAD-binding FR-type domain in the interval 84–206; that stretch reads ANPYIGKCIY…TGPVGTTMLM (123 aa). FAD is bound by residues 142 to 145, 163 to 165, Y169, 180 to 182, and T221; these read RLYS, SVK, and VCS. NADP(+)-binding residues include S145 and K165. NADP(+)-binding positions include T221, 253 to 254, 283 to 284, K293, 322 to 323, and E361; these read VP, SR, and GL.

Belongs to the ferredoxin--NADP reductase type 1 family. The cofactor is FAD.

It is found in the plastid. Its subcellular location is the cyanelle stroma. The protein resides in the cyanelle thylakoid membrane. The catalysed reaction is 2 reduced [2Fe-2S]-[ferredoxin] + NADP(+) + H(+) = 2 oxidized [2Fe-2S]-[ferredoxin] + NADPH. In terms of biological role, may play a key role in regulating the relative amounts of cyclic and non-cyclic electron flow to meet the demands of the plant for ATP and reducing power. The chain is Ferredoxin--NADP reductase, cyanelle (PETH) from Cyanophora paradoxa.